Here is a 525-residue protein sequence, read N- to C-terminus: Protein aurora borealis (525 aa).

The segment at 114-146 (WTDHDGKQPSELHPSKCLSSHDDSPDGKKPSLP) is disordered. Residues 115-142 (TDHDGKQPSELHPSKCLSSHDDSPDGKK) show a composition bias toward basic and acidic residues. Ser191, Ser250, Ser305, and Ser311 each carry phosphoserine. Omega-N-methylarginine is present on Arg316. At Thr331 the chain carries Phosphothreonine. Residues 505 to 525 (PGHTAQRCWMKSPRPSQCSRP) form a disordered region.

It belongs to the BORA family. Interacts with AURKA. Phosphorylated by AURKA.

Functionally, required for the activation of AURKA at the onset of mitosis. The protein is Protein aurora borealis (Bora) of Mus musculus (Mouse).